A 258-amino-acid polypeptide reads, in one-letter code: Methylthioribulose-1-phosphate dehydratase (258 aa).

The span at 1 to 20 (MTPPSNGQAAETNDHLVQSD) shows a compositional bias: polar residues. The segment at 1–21 (MTPPSNGQAAETNDHLVQSDN) is disordered. Position 105 (C105) interacts with substrate. Zn(2+)-binding residues include H123 and H125. Residue E153 is the Proton donor/acceptor of the active site. H210 provides a ligand contact to Zn(2+).

This sequence belongs to the aldolase class II family. MtnB subfamily. The cofactor is Zn(2+).

It is found in the cytoplasm. It catalyses the reaction 5-(methylsulfanyl)-D-ribulose 1-phosphate = 5-methylsulfanyl-2,3-dioxopentyl phosphate + H2O. The protein operates within amino-acid biosynthesis; L-methionine biosynthesis via salvage pathway; L-methionine from S-methyl-5-thio-alpha-D-ribose 1-phosphate: step 2/6. Catalyzes the dehydration of methylthioribulose-1-phosphate (MTRu-1-P) into 2,3-diketo-5-methylthiopentyl-1-phosphate (DK-MTP-1-P). This Chaetomium globosum (strain ATCC 6205 / CBS 148.51 / DSM 1962 / NBRC 6347 / NRRL 1970) (Soil fungus) protein is Methylthioribulose-1-phosphate dehydratase.